The chain runs to 253 residues: 5-oxoprolinase subunit A (253 aa).

Belongs to the LamB/PxpA family. As to quaternary structure, forms a complex composed of PxpA, PxpB and PxpC.

The enzyme catalyses 5-oxo-L-proline + ATP + 2 H2O = L-glutamate + ADP + phosphate + H(+). Functionally, catalyzes the cleavage of 5-oxoproline to form L-glutamate coupled to the hydrolysis of ATP to ADP and inorganic phosphate. The polypeptide is 5-oxoprolinase subunit A (Azorhizobium caulinodans (strain ATCC 43989 / DSM 5975 / JCM 20966 / LMG 6465 / NBRC 14845 / NCIMB 13405 / ORS 571)).